Consider the following 672-residue polypeptide: UvrABC system protein B (672 aa).

The Helicase ATP-binding domain maps to 26 to 183 (EGLEDGLAHQ…RRLSELQYVR (158 aa)). Position 39 to 46 (39 to 46 (GVTGSGKT)) interacts with ATP. The short motif at 92-115 (YYDYYQPEAYVPSSDTFIEKDASV) is the Beta-hairpin element. One can recognise a Helicase C-terminal domain in the interval 431–597 (QVDDLLSEIN…ALNKKVTDIL (167 aa)). Positions 601 to 623 (DGPVRSRTKGARGQRAAEPHPDY) are disordered. A UVR domain is found at 632–667 (EQQIQRLETQMYQHAQNLEFEQAAALRDEIHILREQ).

It belongs to the UvrB family. As to quaternary structure, forms a heterotetramer with UvrA during the search for lesions. Interacts with UvrC in an incision complex.

It localises to the cytoplasm. In terms of biological role, the UvrABC repair system catalyzes the recognition and processing of DNA lesions. A damage recognition complex composed of 2 UvrA and 2 UvrB subunits scans DNA for abnormalities. Upon binding of the UvrA(2)B(2) complex to a putative damaged site, the DNA wraps around one UvrB monomer. DNA wrap is dependent on ATP binding by UvrB and probably causes local melting of the DNA helix, facilitating insertion of UvrB beta-hairpin between the DNA strands. Then UvrB probes one DNA strand for the presence of a lesion. If a lesion is found the UvrA subunits dissociate and the UvrB-DNA preincision complex is formed. This complex is subsequently bound by UvrC and the second UvrB is released. If no lesion is found, the DNA wraps around the other UvrB subunit that will check the other stand for damage. In Edwardsiella ictaluri (strain 93-146), this protein is UvrABC system protein B.